Here is a 493-residue protein sequence, read N- to C-terminus: EGF-containing fibulin-like extracellular matrix protein 1 (493 aa).

The first 17 residues, 1–17 (MLQTLFLTMLTLALVKS), serve as a signal peptide directing secretion. The EGF-like 1; atypical domain occupies 26-71 (YTQCTDGYEWDPIRQQCKDIDECDIVPDACKGGMKCVNHYGGYLCL). Residues 173-213 (DIDECTSGTHNCRTDQVCINLRGSFTCQCLPGYQKRGEQCV) enclose the EGF-like 2; calcium-binding domain. Cystine bridges form between Cys-177-Cys-190, Cys-184-Cys-199, Cys-201-Cys-212, Cys-218-Cys-228, Cys-224-Cys-237, Cys-239-Cys-252, Cys-258-Cys-268, Cys-264-Cys-277, Cys-279-Cys-292, Cys-298-Cys-309, Cys-305-Cys-318, Cys-320-Cys-332, Cys-338-Cys-350, Cys-344-Cys-359, and Cys-365-Cys-377. The EGF-like 3; calcium-binding domain maps to 214–253 (DIDECTVPPYCHQRCVNTPGSFYCQCSPGFQLAANNYTCV). Asn-249 is a glycosylation site (N-linked (GlcNAc...) asparagine). The EGF-like 4; calcium-binding domain maps to 254–293 (DINECDASNQCAQQCYNILGSFICQCNQGYELSSDRLNCE). The interval 259-493 (DASNQCAQQC…LTIIVGPFSF (235 aa)) is mediates interaction with TIMP3. The region spanning 294 to 333 (DIDECRTSSYLCQYQCVNEPGKFSCMCPQGYEVVRSRTCQ) is the EGF-like 5; calcium-binding domain. Positions 334-378 (DINECETTNECREDEMCWNYHGGFRCYPRNPCQDHYVLTSENRCV) constitute an EGF-like 6; calcium-binding domain.

Belongs to the fibulin family. In terms of assembly, interacts with ECM1. Interacts with TIMP3. As to expression, expressed in the eye in the ciliary body, cornea, inner nuclear layer of the retina, and in the optic disk.

It is found in the secreted. It localises to the extracellular space. The protein localises to the extracellular matrix. Its function is as follows. Binds EGFR, the EGF receptor, inducing EGFR autophosphorylation and the activation of downstream signaling pathways. May play a role in cell adhesion and migration. May function as a negative regulator of chondrocyte differentiation. In the olfactory epithelium, it may regulate glial cell migration, differentiation and the ability of glial cells to support neuronal neurite outgrowth. The polypeptide is EGF-containing fibulin-like extracellular matrix protein 1 (Efemp1) (Mus musculus (Mouse)).